A 265-amino-acid chain; its full sequence is Phosphonates import ATP-binding protein PhnC 1 (265 aa).

An ABC transporter domain is found at 3-247 (LRLSGIELRH…HLDTLYANEQ (245 aa)). 36-43 (GPSGAGKT) is a binding site for ATP. Positions 245 to 265 (NEQLSPQPAPDVSETPWTPRC) are disordered.

This sequence belongs to the ABC transporter superfamily. Phosphonates importer (TC 3.A.1.9.1) family. In terms of assembly, the complex is composed of two ATP-binding proteins (PhnC), two transmembrane proteins (PhnE) and a solute-binding protein (PhnD).

Its subcellular location is the cell inner membrane. It carries out the reaction phosphonate(out) + ATP + H2O = phosphonate(in) + ADP + phosphate + H(+). In terms of biological role, part of the ABC transporter complex PhnCDE involved in phosphonates import. Responsible for energy coupling to the transport system. The sequence is that of Phosphonates import ATP-binding protein PhnC 1 from Pseudomonas savastanoi pv. phaseolicola (strain 1448A / Race 6) (Pseudomonas syringae pv. phaseolicola (strain 1448A / Race 6)).